A 780-amino-acid polypeptide reads, in one-letter code: Phosphoenolpyruvate synthase (780 aa).

The active-site Tele-phosphohistidine intermediate is histidine 409. Residues arginine 499, arginine 566, glutamate 668, glycine 689, serine 690, asparagine 691, and aspartate 692 each coordinate substrate. Glutamate 668 is a Mg(2+) binding site. Residue aspartate 692 participates in Mg(2+) binding.

It belongs to the PEP-utilizing enzyme family. Mg(2+) is required as a cofactor.

It catalyses the reaction pyruvate + ATP + H2O = phosphoenolpyruvate + AMP + phosphate + 2 H(+). Its pathway is carbohydrate biosynthesis; gluconeogenesis. In terms of biological role, catalyzes the phosphorylation of pyruvate to phosphoenolpyruvate. The chain is Phosphoenolpyruvate synthase (ppsA) from Deinococcus radiodurans (strain ATCC 13939 / DSM 20539 / JCM 16871 / CCUG 27074 / LMG 4051 / NBRC 15346 / NCIMB 9279 / VKM B-1422 / R1).